The sequence spans 135 residues: Fatty acid-binding protein 5 (135 aa).

Ala2 is modified (N-acetylalanine). Position 17 is an N6-acetyllysine (Lys17). A Nuclear localization signal motif is present at residues 24–34 (KELGVGIALRK). Positions 43 and 109 each coordinate N-eicosanoyl ethanolamine. A disulfide bond links Cys120 and Cys127. Position 129-131 (129-131 (RIY)) interacts with (9Z,12Z)-octadecadienoate. Tyr131 serves as a coordination point for N-eicosanoyl ethanolamine. Tyr131 contributes to the hexadecanoate binding site. Tyr131 carries the post-translational modification Phosphotyrosine.

Belongs to the calycin superfamily. Fatty-acid binding protein (FABP) family. Monomer. Homodimer. In terms of tissue distribution, keratinocytes; highly expressed in psoriatic skin. Expressed in brain gray matter.

It is found in the cytoplasm. The protein resides in the nucleus. It localises to the synapse. Its subcellular location is the postsynaptic density. The protein localises to the secreted. The catalysed reaction is hexadecanoate(out) = hexadecanoate(in). The enzyme catalyses (9Z,12Z)-octadecadienoate(out) = (9Z,12Z)-octadecadienoate(in). It carries out the reaction (9Z)-octadecenoate(out) = (9Z)-octadecenoate(in). Intracellular carrier for long-chain fatty acids and related active lipids, such as endocannabinoids, that regulate the metabolism and actions of the ligands they bind. In addition to the cytosolic transport, selectively delivers specific fatty acids from the cytosol to the nucleus, wherein they activate nuclear receptors. Delivers retinoic acid to the nuclear receptor peroxisome proliferator-activated receptor delta; which promotes proliferation and survival. May also serve as a synaptic carrier of endocannabinoid at central synapses and thus controls retrograde endocannabinoid signaling. Modulates inflammation by regulating PTGES induction via NF-kappa-B activation, and prostaglandin E2 (PGE2) biosynthesis during inflammation. May be involved in keratinocyte differentiation. This Homo sapiens (Human) protein is Fatty acid-binding protein 5.